The chain runs to 326 residues: Target of rapamycin complex subunit LST8 (326 aa).

Met-1 carries the N-acetylmethionine modification. WD repeat units follow at residues Met-1 to Thr-37, His-40 to Ser-80, Gly-83 to Gln-122, Gln-126 to Leu-165, and Glu-168 to Val-207. Phosphothreonine is present on Thr-51. Residue Lys-86 forms a Glycyl lysine isopeptide (Lys-Gly) (interchain with G-Cter in SUMO3) linkage. Glycyl lysine isopeptide (Lys-Gly) (interchain with G-Cter in SUMO3) cross-links involve residues Lys-215, Lys-245, and Lys-261. Residues Ala-218–Glu-257 form a WD 6 repeat. A WD 7 repeat occupies Ser-268–Gly-309. Lys-305 is covalently cross-linked (Glycyl lysine isopeptide (Lys-Gly) (interchain with G-Cter in SUMO3); alternate). Glycyl lysine isopeptide (Lys-Gly) (interchain with G-Cter in ubiquitin); alternate cross-links involve residues Lys-305 and Lys-313. Lys-313 participates in a covalent cross-link: Glycyl lysine isopeptide (Lys-Gly) (interchain with G-Cter in SUMO1); alternate.

This sequence belongs to the WD repeat LST8 family. In terms of assembly, part of the mechanistic target of rapamycin complex 1 (mTORC1) which contains MTOR, MLST8 and RPTOR. mTORC1 associates with AKT1S1/PRAS40, which inhibits its activity. mTORC1 binds to and is inhibited by FKBP12-rapamycin. Within mTORC1, interacts directly with MTOR and RPTOR. Component of the mechanistic target of rapamycin complex 2 (mTORC2), consisting in two heterotretramers composed of MTOR, MLST8, RICTOR and MAPKAP1/SIN1. Contrary to mTORC1, mTORC2 does not bind to and is not sensitive to FKBP12-rapamycin. mTORC1 and mTORC2 associate with DEPTOR, which regulates their activity. Interacts with RHEB. Interacts with MEAK7. Interacts with SIK3. Interacts with SLC38A7; this interaction promotes the recruitment of mTORC1 to the lysosome and its subsequent activation. In terms of processing, phosphorylation at Thr-51 by CDK1 promotes ubiquitination by the SCF(FBXW7) complex, followed by degradation. Ubiquitination by the SCF(FBXW7) and SCF(FBXW11) complexes following phosphorylation at Thr-51 by CDK1, leads to its degradation by the proteasome. Ubiquitination at Lys-305 and Lys-313 by TRAF2 via 'Lys-63'-linked polyubiquitin chains inhibits formation of the mTORC2 complex, while promoting formation of the mTORC1 complex: ubiquitination disrupts the interaction between MLST8 and MAPKAP1/SIN1 to favor mTORC1 assembly. Deubiquitination at Lys-305 and Lys-313 by OTUD7B promotes MLST8 interaction with MAPKAP1/SIN1, facilitating mTORC2 assembly. Post-translationally, sumoylation with SUMO1, SUMO2 and SUMO3 promotes assembly of both mTORC1 and mTORC2 complexes.

It is found in the lysosome membrane. The protein localises to the cytoplasm. Subunit of both mTORC1 and mTORC2, which regulates cell growth and survival in response to nutrient and hormonal signals. mTORC1 is activated in response to growth factors or amino acids. In response to nutrients, mTORC1 is recruited to the lysosome membrane and promotes protein, lipid and nucleotide synthesis by phosphorylating several substrates, such as ribosomal protein S6 kinase (RPS6KB1 and RPS6KB2) and EIF4EBP1 (4E-BP1). In the same time, it inhibits catabolic pathways by phosphorylating the autophagy initiation components ULK1 and ATG13, as well as transcription factor TFEB, a master regulators of lysosomal biogenesis and autophagy. The mTORC1 complex is inhibited in response to starvation and amino acid depletion. Within mTORC1, MLST8 interacts directly with MTOR and enhances its kinase activity. In nutrient-poor conditions, stabilizes the MTOR-RPTOR interaction and favors RPTOR-mediated inhibition of MTOR activity. As part of the mTORC2 complex, transduces signals from growth factors to pathways involved in proliferation, cytoskeletal organization, lipogenesis and anabolic output. mTORC2 is also activated by growth factors, but seems to be nutrient-insensitive. In response to growth factors, mTORC2 phosphorylates and activates AGC protein kinase family members, including AKT (AKT1, AKT2 and AKT3), PKC (PRKCA, PRKCB and PRKCE) and SGK1. mTORC2 functions upstream of Rho GTPases to regulate the actin cytoskeleton, probably by activating one or more Rho-type guanine nucleotide exchange factors. mTORC2 promotes the serum-induced formation of stress-fibers or F-actin. mTORC2 plays a critical role in AKT1 activation by mediating phosphorylation of different sites depending on the context, such as 'Thr-450', 'Ser-473', 'Ser-477' or 'Thr-479', facilitating the phosphorylation of the activation loop of AKT1 on 'Thr-308' by PDPK1/PDK1 which is a prerequisite for full activation. mTORC2 regulates the phosphorylation of SGK1 at 'Ser-422'. mTORC2 also modulates the phosphorylation of PRKCA on 'Ser-657'. Within mTORC2, MLST8 acts as a bridge between MAPKAP1/SIN1 and MTOR. The protein is Target of rapamycin complex subunit LST8 of Bos taurus (Bovine).